We begin with the raw amino-acid sequence, 103 residues long: Large ribosomal subunit protein bL21 (103 aa).

It belongs to the bacterial ribosomal protein bL21 family. Part of the 50S ribosomal subunit. Contacts protein L20.

This protein binds to 23S rRNA in the presence of protein L20. The chain is Large ribosomal subunit protein bL21 from Borrelia garinii subsp. bavariensis (strain ATCC BAA-2496 / DSM 23469 / PBi) (Borreliella bavariensis).